Here is a 530-residue protein sequence, read N- to C-terminus: Pre-mRNA-splicing factor PRP9 (530 aa).

The Matrin-type 1 zinc finger occupies 280–310; it reads IYCPFCSRWFKTSSVFESHLVGKIHKKNESK. Positions 367 to 388 are disordered; the sequence is DSTEKEGAEQVDGEQRDGQLQE. Positions 368 to 388 are enriched in basic and acidic residues; the sequence is STEKEGAEQVDGEQRDGQLQE. The Matrin-type 2 zinc-finger motif lies at 421-452; the sequence is YRCEICSNKVYNGRRTFERHFNEERHIYHLRC. The interval 488-516 is disordered; the sequence is AVPPKPNPSQLKVPTELELEEEDEEGNVM. Positions 504–513 are enriched in acidic residues; the sequence is LELEEEDEEG.

Belongs to the SF3A3 family. In terms of assembly, belongs to the CWC complex (or CEF1-associated complex), a spliceosome sub-complex reminiscent of a late-stage spliceosome composed of the U2, U5 and U6 snRNAs and at least BUD13, BUD31, BRR2, CDC40, CEF1, CLF1, CUS1, CWC2, CWC15, CWC21, CWC22, CWC23, CWC24, CWC25, CWC27, ECM2, HSH155, IST3, ISY1, LEA1, MSL1, NTC20, PRP8, PRP9, PRP11, PRP19, PRP21, PRP22, PRP45, PRP46, SLU7, SMB1, SMD1, SMD2, SMD3, SMX2, SMX3, SNT309, SNU114, SPP2, SYF1, SYF2, RSE1 and YJU2.

Its subcellular location is the nucleus. In terms of biological role, mRNA splicing factors, PRP9, PRP11, and PRP21, are necessary for binding of the U2 snRNP to the pre-mRNA in an early step of spliceosome assembly. The chain is Pre-mRNA-splicing factor PRP9 (PRP9) from Saccharomyces cerevisiae (strain ATCC 204508 / S288c) (Baker's yeast).